We begin with the raw amino-acid sequence, 294 residues long: MTHDYIVKSLAFDGEIRAYAALTTESVQEAQTRHYTWPTASAAMGRTMTATLLMGSMLKGEQKLTVTVDGKGPIGRIIADADAEGNVRAYVDKPQTHFPLNEQGKLDVRRAVGTDGSIQVVKDVGMKDYFSGASPIVSGELGEDFTYYFATSEQTPSSVGLGVLVNPDNSIKAAGGFIIQVMPGAKDETVTKLENAINNMQPVSKLIEQGLTPEGILNEILGEDNVQILETMQAQFECNCSHEKFLNAIKGLGEAEIQDMIKEDHGAEAICHFCGNKYNYSEAELEDLLASMNA.

Disulfide bonds link Cys238–Cys240 and Cys271–Cys274.

The protein belongs to the HSP33 family. Post-translationally, under oxidizing conditions two disulfide bonds are formed involving the reactive cysteines. Under reducing conditions zinc is bound to the reactive cysteines and the protein is inactive.

It localises to the cytoplasm. Redox regulated molecular chaperone. Protects both thermally unfolding and oxidatively damaged proteins from irreversible aggregation. Plays an important role in the bacterial defense system toward oxidative stress. This is 33 kDa chaperonin from Staphylococcus haemolyticus (strain JCSC1435).